A 935-amino-acid chain; its full sequence is Isoleucine--tRNA ligase (935 aa).

The 'HIGH' region motif lies at 58–68; that stretch reads PYANGSIHVGH. Glutamate 558 serves as a coordination point for L-isoleucyl-5'-AMP. Residues 599-603 carry the 'KMSKS' region motif; the sequence is KMSKS. Lysine 602 is a binding site for ATP. Zn(2+) is bound by residues cysteine 897, cysteine 900, cysteine 917, and cysteine 920.

The protein belongs to the class-I aminoacyl-tRNA synthetase family. IleS type 1 subfamily. Monomer. The cofactor is Zn(2+).

It localises to the cytoplasm. It catalyses the reaction tRNA(Ile) + L-isoleucine + ATP = L-isoleucyl-tRNA(Ile) + AMP + diphosphate. Its function is as follows. Catalyzes the attachment of isoleucine to tRNA(Ile). As IleRS can inadvertently accommodate and process structurally similar amino acids such as valine, to avoid such errors it has two additional distinct tRNA(Ile)-dependent editing activities. One activity is designated as 'pretransfer' editing and involves the hydrolysis of activated Val-AMP. The other activity is designated 'posttransfer' editing and involves deacylation of mischarged Val-tRNA(Ile). The polypeptide is Isoleucine--tRNA ligase (Francisella tularensis subsp. tularensis (strain WY96-3418)).